A 338-amino-acid chain; its full sequence is Tryptophan--tRNA ligase (338 aa).

ATP is bound by residues 18-20 and 26-27; these read QPS and GN. Positions 19-27 match the 'HIGH' region motif; the sequence is PSGNLTIGN. L-tryptophan is bound at residue D142. Residues 154 to 156, I193, and 202 to 206 contribute to the ATP site; these read GND and KMSKS. A 'KMSKS' region motif is present at residues 202 to 206; it reads KMSKS.

This sequence belongs to the class-I aminoacyl-tRNA synthetase family. Homodimer.

It is found in the cytoplasm. The enzyme catalyses tRNA(Trp) + L-tryptophan + ATP = L-tryptophyl-tRNA(Trp) + AMP + diphosphate + H(+). Functionally, catalyzes the attachment of tryptophan to tRNA(Trp). This Clostridium tetani (strain Massachusetts / E88) protein is Tryptophan--tRNA ligase.